Consider the following 524-residue polypeptide: Portal protein (524 aa).

Residues 486 to 516 are a coiled coil; it reads AMKDILQMTDEEIEQEAKQIEEESKEARFQD. Basic and acidic residues predominate over residues 500–516; that stretch reads QEAKQIEEESKEARFQD. Residues 500–524 are disordered; it reads QEAKQIEEESKEARFQDPDQEQEDF.

The protein belongs to the Tevenvirinae portal protein family. As to quaternary structure, homododecamer. Interacts with the large terminase subunit. Interacts with the major capsid protein. Interacts with the capsid vertex protein.

It localises to the virion. Its subcellular location is the host cell inner membrane. In terms of biological role, forms the portal vertex of the capsid. This portal plays critical roles in head assembly, genome packaging, neck/tail attachment, and genome ejection. The portal protein multimerizes as a single ring-shaped homododecamer arranged around a central channel. Binds to the terminase subunits to form the packaging machine. Attaches to the host inner membrane most likely through interaction with host yidC and forms together with chaperone gp40 an initiator complex to form the prohead. The polypeptide is Portal protein (20) (Enterobacteria phage T4 (Bacteriophage T4)).